The sequence spans 94 residues: Aspartyl/glutamyl-tRNA(Asn/Gln) amidotransferase subunit C (94 aa).

This sequence belongs to the GatC family. Heterotrimer of A, B and C subunits.

It catalyses the reaction L-glutamyl-tRNA(Gln) + L-glutamine + ATP + H2O = L-glutaminyl-tRNA(Gln) + L-glutamate + ADP + phosphate + H(+). The catalysed reaction is L-aspartyl-tRNA(Asn) + L-glutamine + ATP + H2O = L-asparaginyl-tRNA(Asn) + L-glutamate + ADP + phosphate + 2 H(+). In terms of biological role, allows the formation of correctly charged Asn-tRNA(Asn) or Gln-tRNA(Gln) through the transamidation of misacylated Asp-tRNA(Asn) or Glu-tRNA(Gln) in organisms which lack either or both of asparaginyl-tRNA or glutaminyl-tRNA synthetases. The reaction takes place in the presence of glutamine and ATP through an activated phospho-Asp-tRNA(Asn) or phospho-Glu-tRNA(Gln). The polypeptide is Aspartyl/glutamyl-tRNA(Asn/Gln) amidotransferase subunit C (Desulfotalea psychrophila (strain LSv54 / DSM 12343)).